The sequence spans 401 residues: Lipid-A-disaccharide synthase (401 aa).

This sequence belongs to the LpxB family.

The enzyme catalyses a lipid X + a UDP-2-N,3-O-bis[(3R)-3-hydroxyacyl]-alpha-D-glucosamine = a lipid A disaccharide + UDP + H(+). Its pathway is bacterial outer membrane biogenesis; LPS lipid A biosynthesis. Condensation of UDP-2,3-diacylglucosamine and 2,3-diacylglucosamine-1-phosphate to form lipid A disaccharide, a precursor of lipid A, a phosphorylated glycolipid that anchors the lipopolysaccharide to the outer membrane of the cell. The chain is Lipid-A-disaccharide synthase from Rhodospirillum centenum (strain ATCC 51521 / SW).